A 721-amino-acid chain; its full sequence is Polyribonucleotide nucleotidyltransferase (721 aa).

2 residues coordinate Mg(2+): Asp486 and Asp492. The 60-residue stretch at 553–612 (PKIVQLQIDIDKISLVIGSTGKTVKAITDEFEVKVQIEQNGKIILFGDDDFKMQKAKERI) folds into the KH domain. One can recognise an S1 motif domain in the interval 622–716 (GEIYEGIVKK…KFGKIDLEVV (95 aa)).

The protein belongs to the polyribonucleotide nucleotidyltransferase family. The cofactor is Mg(2+).

Its subcellular location is the cytoplasm. The enzyme catalyses RNA(n+1) + phosphate = RNA(n) + a ribonucleoside 5'-diphosphate. Functionally, involved in mRNA degradation. Catalyzes the phosphorolysis of single-stranded polyribonucleotides processively in the 3'- to 5'-direction. The polypeptide is Polyribonucleotide nucleotidyltransferase (Borrelia garinii subsp. bavariensis (strain ATCC BAA-2496 / DSM 23469 / PBi) (Borreliella bavariensis)).